The sequence spans 355 residues: NADH-quinone oxidoreductase subunit H (355 aa).

8 helical membrane passes run 25-45 (IVRILVVSVVILLCVAYLILW), 91-111 (WLYLIAPVMTVVPAFAVWAVI), 126-146 (LLYAMAISSIGVYAVILAGWA), 170-190 (MGFALVLVLMTAGSLNLSEIV), 205-225 (FLSWNWLPLLPAFVVYFISGI), 252-272 (GMAFALFFLAEYINMIVISAL), 290-310 (FIPGIFWLVLKIFALLSVFIW), and 330-350 (VFLPVTVVWVVVVGFWMMSPL).

It belongs to the complex I subunit 1 family. In terms of assembly, NDH-1 is composed of 14 different subunits. Subunits NuoA, H, J, K, L, M, N constitute the membrane sector of the complex.

The protein localises to the cell inner membrane. It catalyses the reaction a quinone + NADH + 5 H(+)(in) = a quinol + NAD(+) + 4 H(+)(out). Functionally, NDH-1 shuttles electrons from NADH, via FMN and iron-sulfur (Fe-S) centers, to quinones in the respiratory chain. The immediate electron acceptor for the enzyme in this species is believed to be ubiquinone. Couples the redox reaction to proton translocation (for every two electrons transferred, four hydrogen ions are translocated across the cytoplasmic membrane), and thus conserves the redox energy in a proton gradient. This subunit may bind ubiquinone. The chain is NADH-quinone oxidoreductase subunit H from Burkholderia lata (strain ATCC 17760 / DSM 23089 / LMG 22485 / NCIMB 9086 / R18194 / 383).